Reading from the N-terminus, the 301-residue chain is MKVGVIMGGISSEREISLKSGKSIVDSINKNKYEVVSIVIDEKEDIINKVKGIDFALLALHGQFGEDGTVQSVLQTLEIPYSGCGPLSSSMCMDKDISKCILKAANIRTAPWINLRRNDKINYEKIEGMGYPVVVKPTHGGSSVATFIIKEEKDIKNAVTEAFKWDSEVIIEKFIKGDEITCPVFGDKMLPVVAIKPKAEFFDFTAKYADGGSDEFVTELPKELHEEVEEMALATYKALKCEVYSRVDMIVTEDKVPYILEVNTLPGMTPNSLIPKSAAGVNISFSELIDMIIDESIKVIR.

An ATP-grasp domain is found at 99-294 (KCILKAANIR…FSELIDMIID (196 aa)). 126 to 181 (IEGMGYPVVVKPTHGGSSVATFIIKEEKDIKNAVTEAFKWDSEVIIEKFIKGDEIT) is an ATP binding site. Mg(2+) is bound by residues aspartate 248, glutamate 261, and asparagine 263.

Belongs to the D-alanine--D-alanine ligase family. Requires Mg(2+) as cofactor. The cofactor is Mn(2+).

Its subcellular location is the cytoplasm. The catalysed reaction is 2 D-alanine + ATP = D-alanyl-D-alanine + ADP + phosphate + H(+). It participates in cell wall biogenesis; peptidoglycan biosynthesis. Its function is as follows. Cell wall formation. The polypeptide is D-alanine--D-alanine ligase (Clostridium botulinum (strain Eklund 17B / Type B)).